A 382-amino-acid chain; its full sequence is Processive diacylglycerol beta-glucosyltransferase (382 aa).

It belongs to the glycosyltransferase 28 family. UgtP subfamily.

The protein resides in the cell membrane. It catalyses the reaction a 1,2-diacyl-3-O-(beta-D-glucopyranosyl)-sn-glycerol + UDP-alpha-D-glucose = a 1,2-diacyl-3-O-(beta-D-Glc-(1-&gt;6)-beta-D-Glc)-sn-glycerol + UDP + H(+). The catalysed reaction is a 1,2-diacyl-3-O-(beta-D-Glc-(1-&gt;6)-beta-D-Glc)-sn-glycerol + UDP-alpha-D-glucose = a 1,2-diacyl-3-O-(beta-D-Glc-(1-&gt;6)-beta-D-Glc-(1-&gt;6)-beta-D-Glc)-sn-glycerol + UDP + H(+). It carries out the reaction a 1,2-diacyl-sn-glycerol + UDP-alpha-D-glucose = a 1,2-diacyl-3-O-(beta-D-glucopyranosyl)-sn-glycerol + UDP + H(+). It participates in glycolipid metabolism; diglucosyl-diacylglycerol biosynthesis. Functionally, processive glucosyltransferase involved in the biosynthesis of both the bilayer- and non-bilayer-forming membrane glucolipids. Is able to successively transfer up to three glucosyl residues to diacylglycerol (DAG), thereby catalyzing the formation of beta-monoglucosyl-DAG (3-O-(beta-D-glucopyranosyl)-1,2-diacyl-sn-glycerol), beta-diglucosyl-DAG (3-O-(beta-D-glucopyranosyl-beta-(1-&gt;6)-D-glucopyranosyl)-1,2-diacyl-sn-glycerol) and beta-triglucosyl-DAG (3-O-(beta-D-glucopyranosyl-beta-(1-&gt;6)-D-glucopyranosyl-beta-(1-&gt;6)-D-glucopyranosyl)-1,2-diacyl-sn-glycerol). Beta-diglucosyl-DAG is the predominant glycolipid found in Bacillales and is also used as a membrane anchor for lipoteichoic acid (LTA). Also seems to be able to form beta-tetraglucosyl-DAG, although this glycolipid has not been found in B.subtilis membrane. UgtP can only use UDP-glucose as sugar donor. The sequence is that of Processive diacylglycerol beta-glucosyltransferase from Bacillus subtilis (strain 168).